Here is a 437-residue protein sequence, read N- to C-terminus: Doublesex- and mab-3-related transcription factor A2 (437 aa).

A DNA-binding region (DM) is located at residues 49–96 (CARCRNHGVVSALKGHKRYCRWKDCMCAKCTLIAERQRVMAAQVALRR). A disordered region spans residues 160–253 (IPRSMTPQLP…DPSSSSLARQ (94 aa)). Composition is skewed to low complexity over residues 179–201 (SEPV…SGSE) and 223–235 (SPSL…SESG). One can recognise a DMA domain in the interval 254–289 (RTPINILTRVFPAQKRSVLELVLQGCGGDVVQAIEQ).

It belongs to the DMRT family.

The protein resides in the nucleus. May be involved in sexual development. This is Doublesex- and mab-3-related transcription factor A2 (dmrta2) from Xenopus laevis (African clawed frog).